The sequence spans 265 residues: Orotidine 5'-phosphate decarboxylase (265 aa).

Residues D37, 59-61, 91-100, Y217, and R235 contribute to the substrate site; these read KTH and DRKFADIGNT. K93 functions as the Proton donor in the catalytic mechanism.

Belongs to the OMP decarboxylase family.

It catalyses the reaction orotidine 5'-phosphate + H(+) = UMP + CO2. Its pathway is pyrimidine metabolism; UMP biosynthesis via de novo pathway; UMP from orotate: step 2/2. This chain is Orotidine 5'-phosphate decarboxylase (URA3), found in Candida glabrata (strain ATCC 2001 / BCRC 20586 / JCM 3761 / NBRC 0622 / NRRL Y-65 / CBS 138) (Yeast).